The primary structure comprises 418 residues: Glutamyl-tRNA(Gln) amidotransferase subunit D (418 aa).

An Asparaginase/glutaminase domain is found at 74 to 405; that stretch reads KNISILSTGG…EEAKELMPKN (332 aa). Active-site residues include T84, T160, D161, and K237.

Belongs to the asparaginase 1 family. GatD subfamily. In terms of assembly, heterodimer of GatD and GatE.

It catalyses the reaction L-glutamyl-tRNA(Gln) + L-glutamine + ATP + H2O = L-glutaminyl-tRNA(Gln) + L-glutamate + ADP + phosphate + H(+). In terms of biological role, allows the formation of correctly charged Gln-tRNA(Gln) through the transamidation of misacylated Glu-tRNA(Gln) in organisms which lack glutaminyl-tRNA synthetase. The reaction takes place in the presence of glutamine and ATP through an activated gamma-phospho-Glu-tRNA(Gln). The GatDE system is specific for glutamate and does not act on aspartate. In Methanococcus maripaludis (strain C6 / ATCC BAA-1332), this protein is Glutamyl-tRNA(Gln) amidotransferase subunit D.